We begin with the raw amino-acid sequence, 588 residues long: Sulfite reductase [NADPH] hemoprotein beta-component (588 aa).

Residues Cys443, Cys449, Cys488, and Cys492 each coordinate [4Fe-4S] cluster. Cys492 contacts siroheme.

This sequence belongs to the nitrite and sulfite reductase 4Fe-4S domain family. Alpha(8)-beta(8). The alpha component is a flavoprotein, the beta component is a hemoprotein. The cofactor is siroheme. It depends on [4Fe-4S] cluster as a cofactor.

It carries out the reaction hydrogen sulfide + 3 NADP(+) + 3 H2O = sulfite + 3 NADPH + 4 H(+). It participates in sulfur metabolism; hydrogen sulfide biosynthesis; hydrogen sulfide from sulfite (NADPH route): step 1/1. Component of the sulfite reductase complex that catalyzes the 6-electron reduction of sulfite to sulfide. This is one of several activities required for the biosynthesis of L-cysteine from sulfate. The chain is Sulfite reductase [NADPH] hemoprotein beta-component from Actinobacillus succinogenes (strain ATCC 55618 / DSM 22257 / CCUG 43843 / 130Z).